The primary structure comprises 146 residues: D-aminoacyl-tRNA deacylase (146 aa).

Positions 138-139 match the Gly-cisPro motif, important for rejection of L-amino acids motif; that stretch reads GP.

This sequence belongs to the DTD family. As to quaternary structure, homodimer.

It localises to the cytoplasm. The catalysed reaction is glycyl-tRNA(Ala) + H2O = tRNA(Ala) + glycine + H(+). The enzyme catalyses a D-aminoacyl-tRNA + H2O = a tRNA + a D-alpha-amino acid + H(+). In terms of biological role, an aminoacyl-tRNA editing enzyme that deacylates mischarged D-aminoacyl-tRNAs. Also deacylates mischarged glycyl-tRNA(Ala), protecting cells against glycine mischarging by AlaRS. Acts via tRNA-based rather than protein-based catalysis; rejects L-amino acids rather than detecting D-amino acids in the active site. By recycling D-aminoacyl-tRNA to D-amino acids and free tRNA molecules, this enzyme counteracts the toxicity associated with the formation of D-aminoacyl-tRNA entities in vivo and helps enforce protein L-homochirality. In Xanthomonas campestris pv. campestris (strain 8004), this protein is D-aminoacyl-tRNA deacylase.